Reading from the N-terminus, the 142-residue chain is Transcription antitermination protein NusB (142 aa).

Belongs to the NusB family.

Functionally, involved in transcription antitermination. Required for transcription of ribosomal RNA (rRNA) genes. Binds specifically to the boxA antiterminator sequence of the ribosomal RNA (rrn) operons. This is Transcription antitermination protein NusB from Roseiflexus castenholzii (strain DSM 13941 / HLO8).